The following is a 401-amino-acid chain: 8-amino-7-oxononanoate synthase (401 aa).

Arg-19 is a binding site for substrate. 106-107 (GY) serves as a coordination point for pyridoxal 5'-phosphate. His-131 provides a ligand contact to substrate. Pyridoxal 5'-phosphate is bound by residues Ser-176, His-204, and Thr-233. Residue Lys-236 is modified to N6-(pyridoxal phosphate)lysine. Thr-350 lines the substrate pocket.

Belongs to the class-II pyridoxal-phosphate-dependent aminotransferase family. BioF subfamily. As to quaternary structure, homodimer. The cofactor is pyridoxal 5'-phosphate.

It carries out the reaction 6-carboxyhexanoyl-[ACP] + L-alanine + H(+) = (8S)-8-amino-7-oxononanoate + holo-[ACP] + CO2. The protein operates within cofactor biosynthesis; biotin biosynthesis. In terms of biological role, catalyzes the decarboxylative condensation of pimeloyl-[acyl-carrier protein] and L-alanine to produce 8-amino-7-oxononanoate (AON), [acyl-carrier protein], and carbon dioxide. This Pseudomonas paraeruginosa (strain DSM 24068 / PA7) (Pseudomonas aeruginosa (strain PA7)) protein is 8-amino-7-oxononanoate synthase.